The sequence spans 751 residues: Cytosolic neutral trehalase (751 aa).

A compositionally biased stretch (polar residues) spans 1-15 (MDDSALPSNTSNGIN). 2 disordered regions span residues 1-42 (MDDS…NPES) and 64-88 (DFHEMLGDRNTRRGSMDPTSGNPRK). The segment covering 64–78 (DFHEMLGDRNTRRGS) has biased composition (basic and acidic residues). Residues D105, D107, N109, Q111, and D116 each contribute to the Ca(2+) site. Substrate contacts are provided by residues R292, 299–300 (WD), N336, 345–347 (RSQ), E412, R461, and G464. Catalysis depends on proton donor/acceptor residues D466 and E670.

The protein belongs to the glycosyl hydrolase 37 family. The cofactor is Ca(2+).

The protein localises to the cytoplasm. The enzyme catalyses alpha,alpha-trehalose + H2O = alpha-D-glucose + beta-D-glucose. The protein operates within carbohydrate degradation. With respect to regulation, activated by calcium. Hydrolyzes intracellular trehalose to glucose. The disaccharide trehalose serves as a storage carbohydrate that is mobilized during conidial germination. Regulates the level of trehalose as a protectant for cell integrity during heat stress. The chain is Cytosolic neutral trehalase from Emericella nidulans (strain FGSC A4 / ATCC 38163 / CBS 112.46 / NRRL 194 / M139) (Aspergillus nidulans).